A 353-amino-acid polypeptide reads, in one-letter code: Iron(III) enterobactin esterase (353 aa).

This sequence belongs to the Fes family.

It localises to the cytoplasm. The enzyme catalyses Fe(III)-enterobactin + 3 H2O + H(+) = Fe(III)-[N-(2,3-dihydroxybenzoyl)-L-serine] + 2 N-(2,3-dihydroxybenzoyl)-L-serine. It carries out the reaction Fe(III)-enterobactin + H2O = Fe(III)-[N-(2,3-dihydroxybenzoyl)-L-serine]3 + H(+). The catalysed reaction is Fe(III)-[N-(2,3-dihydroxybenzoyl)-L-serine]3 + H2O + H(+) = Fe(III)-[N-(2,3-dihydroxybenzoyl)-L-serine]2 + N-(2,3-dihydroxybenzoyl)-L-serine. It catalyses the reaction Fe(III)-[N-(2,3-dihydroxybenzoyl)-L-serine]2 + H2O + H(+) = Fe(III)-[N-(2,3-dihydroxybenzoyl)-L-serine] + N-(2,3-dihydroxybenzoyl)-L-serine. Functionally, catalyzes the hydrolysis of ferric enterobactin (Fe-Ent). Is responsible for the release of iron from ferric enterobactin. In Yersinia enterocolitica, this protein is Iron(III) enterobactin esterase.